Here is a 221-residue protein sequence, read N- to C-terminus: Probable septum site-determining protein MinC (221 aa).

This sequence belongs to the MinC family. In terms of assembly, interacts with MinD and FtsZ.

Its function is as follows. Cell division inhibitor that blocks the formation of polar Z ring septums. Rapidly oscillates between the poles of the cell to destabilize FtsZ filaments that have formed before they mature into polar Z rings. Prevents FtsZ polymerization. The chain is Probable septum site-determining protein MinC from Shewanella woodyi (strain ATCC 51908 / MS32).